The primary structure comprises 874 residues: Alanine--tRNA ligase (874 aa).

Residues His-562, His-566, Cys-665, and His-669 each contribute to the Zn(2+) site.

It belongs to the class-II aminoacyl-tRNA synthetase family. Requires Zn(2+) as cofactor.

Its subcellular location is the cytoplasm. The enzyme catalyses tRNA(Ala) + L-alanine + ATP = L-alanyl-tRNA(Ala) + AMP + diphosphate. Functionally, catalyzes the attachment of alanine to tRNA(Ala) in a two-step reaction: alanine is first activated by ATP to form Ala-AMP and then transferred to the acceptor end of tRNA(Ala). Also edits incorrectly charged Ser-tRNA(Ala) and Gly-tRNA(Ala) via its editing domain. The polypeptide is Alanine--tRNA ligase (Pseudomonas syringae pv. syringae (strain B728a)).